The following is a 334-amino-acid chain: Cathepsin J (334 aa).

The signal sequence occupies residues Met-1–Gly-17. The propeptide at Ala-18–Gly-113 is activation peptide. Asn-72 is a glycosylation site (N-linked (GlcNAc...) asparagine). 2 disulfide bridges follow: Cys-135–Cys-178 and Cys-169–Cys-211. The active site involves Cys-138. N-linked (GlcNAc...) asparagine glycans are attached at residues Asn-217, Asn-221, and Asn-268. A disulfide bridge links Cys-269 with Cys-322. Catalysis depends on residues His-276 and Asn-300.

This sequence belongs to the peptidase C1 family. In terms of tissue distribution, expressed specifically in placenta.

It localises to the lysosome. This is Cathepsin J (Ctsj) from Mus musculus (Mouse).